The chain runs to 208 residues: UPF0637 protein BCAH820_3975 (208 aa).

The protein belongs to the UPF0637 family.

This chain is UPF0637 protein BCAH820_3975, found in Bacillus cereus (strain AH820).